The sequence spans 117 residues: Large ribosomal subunit protein uL18 (117 aa).

The protein belongs to the universal ribosomal protein uL18 family. As to quaternary structure, part of the 50S ribosomal subunit; part of the 5S rRNA/L5/L18/L25 subcomplex. Contacts the 5S and 23S rRNAs.

This is one of the proteins that bind and probably mediate the attachment of the 5S RNA into the large ribosomal subunit, where it forms part of the central protuberance. The polypeptide is Large ribosomal subunit protein uL18 (Leuconostoc mesenteroides subsp. mesenteroides (strain ATCC 8293 / DSM 20343 / BCRC 11652 / CCM 1803 / JCM 6124 / NCDO 523 / NBRC 100496 / NCIMB 8023 / NCTC 12954 / NRRL B-1118 / 37Y)).